We begin with the raw amino-acid sequence, 96 residues long: Small ribosomal subunit protein uS19 (96 aa).

Belongs to the universal ribosomal protein uS19 family.

In terms of biological role, protein S19 forms a complex with S13 that binds strongly to the 16S ribosomal RNA. In Koribacter versatilis (strain Ellin345), this protein is Small ribosomal subunit protein uS19.